The primary structure comprises 304 residues: NADH-cytochrome b5 reductase 2 (304 aa).

The helical transmembrane segment at M9–G29 threads the bilayer. Positions N43 to K155 constitute an FAD-binding FR-type domain. FAD-binding positions include D135 to G150 and V174 to L209.

This sequence belongs to the flavoprotein pyridine nucleotide cytochrome reductase family. FAD serves as cofactor.

It localises to the membrane. It carries out the reaction 2 Fe(III)-[cytochrome b5] + NADH = 2 Fe(II)-[cytochrome b5] + NAD(+) + H(+). Functionally, NADH-cytochrome b5 reductases are involved in desaturation and elongation of fatty acids, cholesterol biosynthesis and drug metabolism. The polypeptide is NADH-cytochrome b5 reductase 2 (cyb5r2) (Xenopus tropicalis (Western clawed frog)).